The chain runs to 347 residues: Holliday junction branch migration complex subunit RuvB (347 aa).

The interval glutamine 4 to tyrosine 184 is large ATPase domain (RuvB-L). ATP-binding positions include arginine 24, glycine 65, lysine 68, threonine 69, threonine 70, glutamate 131–phenylalanine 133, arginine 174, tyrosine 184, and arginine 221. Residue threonine 69 participates in Mg(2+) binding. A small ATPAse domain (RuvB-S) region spans residues serine 185 to asparagine 255. The head domain (RuvB-H) stretch occupies residues histidine 258–isoleucine 347. Residues arginine 294, arginine 313, and arginine 318 each coordinate DNA.

It belongs to the RuvB family. Homohexamer. Forms an RuvA(8)-RuvB(12)-Holliday junction (HJ) complex. HJ DNA is sandwiched between 2 RuvA tetramers; dsDNA enters through RuvA and exits via RuvB. An RuvB hexamer assembles on each DNA strand where it exits the tetramer. Each RuvB hexamer is contacted by two RuvA subunits (via domain III) on 2 adjacent RuvB subunits; this complex drives branch migration. In the full resolvosome a probable DNA-RuvA(4)-RuvB(12)-RuvC(2) complex forms which resolves the HJ.

Its subcellular location is the cytoplasm. It carries out the reaction ATP + H2O = ADP + phosphate + H(+). Its function is as follows. The RuvA-RuvB-RuvC complex processes Holliday junction (HJ) DNA during genetic recombination and DNA repair, while the RuvA-RuvB complex plays an important role in the rescue of blocked DNA replication forks via replication fork reversal (RFR). RuvA specifically binds to HJ cruciform DNA, conferring on it an open structure. The RuvB hexamer acts as an ATP-dependent pump, pulling dsDNA into and through the RuvAB complex. RuvB forms 2 homohexamers on either side of HJ DNA bound by 1 or 2 RuvA tetramers; 4 subunits per hexamer contact DNA at a time. Coordinated motions by a converter formed by DNA-disengaged RuvB subunits stimulates ATP hydrolysis and nucleotide exchange. Immobilization of the converter enables RuvB to convert the ATP-contained energy into a lever motion, pulling 2 nucleotides of DNA out of the RuvA tetramer per ATP hydrolyzed, thus driving DNA branch migration. The RuvB motors rotate together with the DNA substrate, which together with the progressing nucleotide cycle form the mechanistic basis for DNA recombination by continuous HJ branch migration. Branch migration allows RuvC to scan DNA until it finds its consensus sequence, where it cleaves and resolves cruciform DNA. The chain is Holliday junction branch migration complex subunit RuvB from Teredinibacter turnerae (strain ATCC 39867 / T7901).